The chain runs to 342 residues: Oxygen-dependent coproporphyrinogen-III oxidase (342 aa).

Ser98 is a substrate binding site. A divalent metal cation-binding residues include His102 and His112. Residue His112 is the Proton donor of the active site. Residue 114 to 116 (NYR) participates in substrate binding. A divalent metal cation contacts are provided by His146 and His176. The segment at 266 to 301 (YVEFNLVWDRGTIFGLQTNGRTESILMSLPPLARWE) is important for dimerization.

The protein belongs to the aerobic coproporphyrinogen-III oxidase family. As to quaternary structure, homodimer. Requires a divalent metal cation as cofactor.

It is found in the cytoplasm. The catalysed reaction is coproporphyrinogen III + O2 + 2 H(+) = protoporphyrinogen IX + 2 CO2 + 2 H2O. It participates in porphyrin-containing compound metabolism; protoporphyrin-IX biosynthesis; protoporphyrinogen-IX from coproporphyrinogen-III (O2 route): step 1/1. Functionally, involved in the heme and chlorophyll biosynthesis. Catalyzes the aerobic oxidative decarboxylation of propionate groups of rings A and B of coproporphyrinogen-III to yield the vinyl groups in protoporphyrinogen-IX. The protein is Oxygen-dependent coproporphyrinogen-III oxidase of Prochlorococcus marinus (strain AS9601).